A 227-amino-acid polypeptide reads, in one-letter code: Biosynthetic peptidoglycan transglycosylase (227 aa).

Residues 7 to 27 (VALLTLLLLVAAPYVLTLVYG) traverse the membrane as a helical segment.

Belongs to the glycosyltransferase 51 family.

It localises to the cell inner membrane. The enzyme catalyses [GlcNAc-(1-&gt;4)-Mur2Ac(oyl-L-Ala-gamma-D-Glu-L-Lys-D-Ala-D-Ala)](n)-di-trans,octa-cis-undecaprenyl diphosphate + beta-D-GlcNAc-(1-&gt;4)-Mur2Ac(oyl-L-Ala-gamma-D-Glu-L-Lys-D-Ala-D-Ala)-di-trans,octa-cis-undecaprenyl diphosphate = [GlcNAc-(1-&gt;4)-Mur2Ac(oyl-L-Ala-gamma-D-Glu-L-Lys-D-Ala-D-Ala)](n+1)-di-trans,octa-cis-undecaprenyl diphosphate + di-trans,octa-cis-undecaprenyl diphosphate + H(+). It functions in the pathway cell wall biogenesis; peptidoglycan biosynthesis. Functionally, peptidoglycan polymerase that catalyzes glycan chain elongation from lipid-linked precursors. In Rhodopseudomonas palustris (strain HaA2), this protein is Biosynthetic peptidoglycan transglycosylase.